The sequence spans 299 residues: dTDP-4-dehydrorhamnose reductase (299 aa).

NADH contacts are provided by residues 10–12 (GQV), D30, 39–40 (DF), and 63–65 (AHT). An NADPH-binding site is contributed by 11–12 (QV). NADPH contacts are provided by residues 39–40 (DF), 63–65 (AHT), and Y102. Position 104 to 105 (104 to 105 (TD)) interacts with dTDP-beta-L-rhamnose. Residues Y128 and K132 each coordinate NADH. 2 residues coordinate NADPH: Y128 and K132. Y128 (proton donor/acceptor) is an active-site residue. W153 is a dTDP-beta-L-rhamnose binding site.

It belongs to the dTDP-4-dehydrorhamnose reductase family. In terms of assembly, homodimer. Mg(2+) is required as a cofactor.

The catalysed reaction is dTDP-beta-L-rhamnose + NADP(+) = dTDP-4-dehydro-beta-L-rhamnose + NADPH + H(+). Its pathway is carbohydrate biosynthesis; dTDP-L-rhamnose biosynthesis. It participates in bacterial outer membrane biogenesis; LPS O-antigen biosynthesis. Functionally, involved in the biosynthesis of the dTDP-L-rhamnose which is an important component of lipopolysaccharide (LPS). Catalyzes the reduction of dTDP-6-deoxy-L-lyxo-4-hexulose to yield dTDP-L-rhamnose. RmlD uses NADH and NADPH nearly equally well. This Salmonella typhimurium (strain LT2 / SGSC1412 / ATCC 700720) protein is dTDP-4-dehydrorhamnose reductase (rfbD).